The chain runs to 485 residues: Putative aldehyde dehydrogenase AldY (485 aa).

231–236 (GSTAVG) contributes to the NAD(+) binding site. Residues glutamate 253 and cysteine 287 contribute to the active site.

It belongs to the aldehyde dehydrogenase family.

It carries out the reaction an aldehyde + NAD(+) + H2O = a carboxylate + NADH + 2 H(+). Functionally, may contribute to protect cells against stress due to ethanol and related compounds. This chain is Putative aldehyde dehydrogenase AldY (aldY), found in Bacillus subtilis (strain 168).